Here is a 66-residue protein sequence, read N- to C-terminus: Large ribosomal subunit protein bL35 (66 aa).

Residues 1 to 16 (MPKQKTHRASAKRFKR) are compositionally biased toward basic residues. The tract at residues 1-21 (MPKQKTHRASAKRFKRTGSGG) is disordered.

Belongs to the bacterial ribosomal protein bL35 family.

This Streptococcus pneumoniae serotype 2 (strain D39 / NCTC 7466) protein is Large ribosomal subunit protein bL35.